The following is a 423-amino-acid chain: Glutamate-1-semialdehyde 2,1-aminomutase (423 aa).

The residue at position 262 (Lys262) is an N6-(pyridoxal phosphate)lysine.

It belongs to the class-III pyridoxal-phosphate-dependent aminotransferase family. HemL subfamily. Homodimer. Pyridoxal 5'-phosphate serves as cofactor.

It is found in the cytoplasm. It catalyses the reaction (S)-4-amino-5-oxopentanoate = 5-aminolevulinate. The protein operates within porphyrin-containing compound metabolism; protoporphyrin-IX biosynthesis; 5-aminolevulinate from L-glutamyl-tRNA(Glu): step 2/2. In Campylobacter fetus subsp. fetus (strain 82-40), this protein is Glutamate-1-semialdehyde 2,1-aminomutase.